The primary structure comprises 352 residues: Quinolinate synthase (352 aa).

Iminosuccinate is bound by residues His-48 and Ser-69. Residue Cys-114 participates in [4Fe-4S] cluster binding. Iminosuccinate-binding positions include 140–142 and Ser-157; that span reads YAN. Cys-201 contacts [4Fe-4S] cluster. Iminosuccinate contacts are provided by residues 227–229 and Thr-244; that span reads HPE. Cys-298 provides a ligand contact to [4Fe-4S] cluster.

The protein belongs to the quinolinate synthase family. Type 1 subfamily. Requires [4Fe-4S] cluster as cofactor.

The protein localises to the cytoplasm. It carries out the reaction iminosuccinate + dihydroxyacetone phosphate = quinolinate + phosphate + 2 H2O + H(+). It participates in cofactor biosynthesis; NAD(+) biosynthesis; quinolinate from iminoaspartate: step 1/1. Catalyzes the condensation of iminoaspartate with dihydroxyacetone phosphate to form quinolinate. The protein is Quinolinate synthase of Ectopseudomonas mendocina (strain ymp) (Pseudomonas mendocina).